We begin with the raw amino-acid sequence, 307 residues long: Glutaminase (307 aa).

Substrate is bound by residues Ser67, Asn117, Glu161, Asn168, Tyr192, Tyr243, and Val261.

Belongs to the glutaminase family. In terms of assembly, homotetramer.

The enzyme catalyses L-glutamine + H2O = L-glutamate + NH4(+). The protein is Glutaminase of Streptomyces coelicolor (strain ATCC BAA-471 / A3(2) / M145).